A 209-amino-acid polypeptide reads, in one-letter code: Protein-L-isoaspartate O-methyltransferase (209 aa).

Serine 55 is an active-site residue.

The protein belongs to the methyltransferase superfamily. L-isoaspartyl/D-aspartyl protein methyltransferase family.

It localises to the cytoplasm. The catalysed reaction is [protein]-L-isoaspartate + S-adenosyl-L-methionine = [protein]-L-isoaspartate alpha-methyl ester + S-adenosyl-L-homocysteine. In terms of biological role, catalyzes the methyl esterification of L-isoaspartyl residues in peptides and proteins that result from spontaneous decomposition of normal L-aspartyl and L-asparaginyl residues. It plays a role in the repair and/or degradation of damaged proteins. The sequence is that of Protein-L-isoaspartate O-methyltransferase from Anaeromyxobacter dehalogenans (strain 2CP-1 / ATCC BAA-258).